The sequence spans 216 residues: MLGIGAFKQRMPRPGEALPGREQALPLHNTHLVNGHPLRGEFIGLAQVQFGLGCFWGAERKFWNVPGVYTTAVGYAGGQTPNATYSEVCSGQTGHTEAVLVVFDEQAVSFAQLLRTFWESHDPTQGMQQGNDVGTQYRSAIYCTTQAQYDAALASRDAYQQQLTAAGYGAITTEIRFPAPTFYYAEDDHQQYLAKHPNGYCGLGGTGVSCPIGLDA.

The active site involves Cys-54.

It belongs to the MsrA Met sulfoxide reductase family.

It carries out the reaction L-methionyl-[protein] + [thioredoxin]-disulfide + H2O = L-methionyl-(S)-S-oxide-[protein] + [thioredoxin]-dithiol. It catalyses the reaction [thioredoxin]-disulfide + L-methionine + H2O = L-methionine (S)-S-oxide + [thioredoxin]-dithiol. Functionally, has an important function as a repair enzyme for proteins that have been inactivated by oxidation. Catalyzes the reversible oxidation-reduction of methionine sulfoxide in proteins to methionine. The protein is Peptide methionine sulfoxide reductase MsrA of Xanthomonas euvesicatoria pv. vesicatoria (strain 85-10) (Xanthomonas campestris pv. vesicatoria).